Here is a 107-residue protein sequence, read N- to C-terminus: U1-lycotoxin-Ls1a (107 aa).

Positions 1-20 are cleaved as a signal peptide; sequence MMKVLVVVALLVTLISYSSS. Positions 21 to 41 are excised as a propeptide; it reads EGIDDLEADELLSLMANEQTR. Intrachain disulfides connect Cys44–Cys59, Cys51–Cys68, Cys58–Cys86, and Cys70–Cys84.

It belongs to the neurotoxin 19 (CSTX) family. 04 (U1-Lctx) subfamily. As to expression, expressed by the venom gland.

It localises to the secreted. This Lycosa singoriensis (Wolf spider) protein is U1-lycotoxin-Ls1a.